A 495-amino-acid polypeptide reads, in one-letter code: UDP-N-acetylmuramoyl-L-alanyl-D-glutamate--2,6-diaminopimelate ligase (495 aa).

UDP-N-acetyl-alpha-D-muramoyl-L-alanyl-D-glutamate contacts are provided by residues leucine 27, serine 29, and 44-46; that span reads HQA. Residue 116-122 participates in ATP binding; that stretch reads GTNGKTT. UDP-N-acetyl-alpha-D-muramoyl-L-alanyl-D-glutamate-binding positions include asparagine 157, 158–159, serine 185, glutamine 191, and arginine 193; that span reads TT. Lysine 225 is subject to N6-carboxylysine. Residues arginine 390, 414–417, glycine 465, and glutamate 469 each bind meso-2,6-diaminopimelate; that span reads DNPR. The Meso-diaminopimelate recognition motif signature appears at 414–417; that stretch reads DNPR.

This sequence belongs to the MurCDEF family. MurE subfamily. Mg(2+) is required as a cofactor. Carboxylation is probably crucial for Mg(2+) binding and, consequently, for the gamma-phosphate positioning of ATP.

It is found in the cytoplasm. It catalyses the reaction UDP-N-acetyl-alpha-D-muramoyl-L-alanyl-D-glutamate + meso-2,6-diaminopimelate + ATP = UDP-N-acetyl-alpha-D-muramoyl-L-alanyl-gamma-D-glutamyl-meso-2,6-diaminopimelate + ADP + phosphate + H(+). Its pathway is cell wall biogenesis; peptidoglycan biosynthesis. In terms of biological role, catalyzes the addition of meso-diaminopimelic acid to the nucleotide precursor UDP-N-acetylmuramoyl-L-alanyl-D-glutamate (UMAG) in the biosynthesis of bacterial cell-wall peptidoglycan. The polypeptide is UDP-N-acetylmuramoyl-L-alanyl-D-glutamate--2,6-diaminopimelate ligase (Salmonella paratyphi A (strain ATCC 9150 / SARB42)).